The primary structure comprises 197 residues: Probable inosine/xanthosine triphosphatase (197 aa).

Residue 9–14 participates in substrate binding; sequence TSNPIK. 2 residues coordinate Mg(2+): Asp-36 and Asp-65.

It belongs to the YjjX NTPase family. As to quaternary structure, homodimer. The cofactor is Mg(2+). Mn(2+) is required as a cofactor.

It catalyses the reaction XTP + H2O = XDP + phosphate + H(+). The catalysed reaction is ITP + H2O = IDP + phosphate + H(+). In terms of biological role, phosphatase that hydrolyzes non-canonical purine nucleotides such as XTP and ITP to their respective diphosphate derivatives. Probably excludes non-canonical purines from DNA/RNA precursor pool, thus preventing their incorporation into DNA/RNA and avoiding chromosomal lesions. In Aeropyrum pernix (strain ATCC 700893 / DSM 11879 / JCM 9820 / NBRC 100138 / K1), this protein is Probable inosine/xanthosine triphosphatase.